Here is a 428-residue protein sequence, read N- to C-terminus: 3-phosphoshikimate 1-carboxyvinyltransferase (428 aa).

The 3-phosphoshikimate site is built by Lys-22, Ser-23, and Arg-27. Lys-22 provides a ligand contact to phosphoenolpyruvate. Phosphoenolpyruvate contacts are provided by Gly-96 and Arg-124. Residues Ser-170, Ser-171, Gln-172, Ser-198, Asp-314, Asn-337, and Lys-341 each coordinate 3-phosphoshikimate. Gln-172 lines the phosphoenolpyruvate pocket. Asp-314 functions as the Proton acceptor in the catalytic mechanism. Arg-345, Arg-387, and Lys-412 together coordinate phosphoenolpyruvate.

This sequence belongs to the EPSP synthase family. Monomer.

Its subcellular location is the cytoplasm. The enzyme catalyses 3-phosphoshikimate + phosphoenolpyruvate = 5-O-(1-carboxyvinyl)-3-phosphoshikimate + phosphate. Its pathway is metabolic intermediate biosynthesis; chorismate biosynthesis; chorismate from D-erythrose 4-phosphate and phosphoenolpyruvate: step 6/7. In terms of biological role, catalyzes the transfer of the enolpyruvyl moiety of phosphoenolpyruvate (PEP) to the 5-hydroxyl of shikimate-3-phosphate (S3P) to produce enolpyruvyl shikimate-3-phosphate and inorganic phosphate. The sequence is that of 3-phosphoshikimate 1-carboxyvinyltransferase from Shewanella denitrificans (strain OS217 / ATCC BAA-1090 / DSM 15013).